Consider the following 335-residue polypeptide: Pregnancy-specific beta-1-glycoprotein 2 (335 aa).

The N-terminal stretch at Met-1–Ala-34 is a signal peptide. The Ig-like V-type domain maps to Gln-35–Leu-144. N-linked (GlcNAc...) asparagine glycans are attached at residues Asn-61, Asn-104, Asn-111, and Asn-199. 2 Ig-like C2-type domains span residues Pro-147–Asn-234 and Pro-239–Thr-317. Intrachain disulfides connect Cys-169–Cys-217 and Cys-261–Cys-301.

This sequence belongs to the immunoglobulin superfamily. CEA family.

The protein localises to the secreted. The polypeptide is Pregnancy-specific beta-1-glycoprotein 2 (PSG2) (Homo sapiens (Human)).